The sequence spans 586 residues: NudC domain-containing protein 1 (586 aa).

The tract at residues 259–278 (KDQPESSEDEKMDEDNKREP) is disordered. Positions 275–364 (KREPLYNWHQ…EPGSTWAELV (90 aa)) constitute a CS domain.

The protein localises to the cytoplasm. The protein resides in the nucleus. The polypeptide is NudC domain-containing protein 1 (Xenopus tropicalis (Western clawed frog)).